The primary structure comprises 217 residues: tRNA (guanine-N(7)-)-methyltransferase (217 aa).

Residues Glu-44, Glu-69, Asp-96, and Asp-118 each contribute to the S-adenosyl-L-methionine site. The active site involves Asp-118. Residues Lys-122, Asp-154, and 191–194 contribute to the substrate site; that span reads TEYE.

It belongs to the class I-like SAM-binding methyltransferase superfamily. TrmB family.

It catalyses the reaction guanosine(46) in tRNA + S-adenosyl-L-methionine = N(7)-methylguanosine(46) in tRNA + S-adenosyl-L-homocysteine. It functions in the pathway tRNA modification; N(7)-methylguanine-tRNA biosynthesis. Its function is as follows. Catalyzes the formation of N(7)-methylguanine at position 46 (m7G46) in tRNA. In Bacillus cytotoxicus (strain DSM 22905 / CIP 110041 / 391-98 / NVH 391-98), this protein is tRNA (guanine-N(7)-)-methyltransferase.